We begin with the raw amino-acid sequence, 309 residues long: Probable ABC transporter permease protein YqgH (309 aa).

6 consecutive transmembrane segments (helical) span residues 30 to 50 (MIVT…TIFL), 88 to 108 (FIFG…PLGI), 133 to 153 (LVGI…VPFI), 165 to 185 (LLAG…SISA), 214 to 234 (LVPA…ARAF), and 280 to 300 (NTLW…ILLI). An ABC transmembrane type-1 domain is found at 89-300 (IFGSFAVTIL…VMSFLFILLI (212 aa)).

It belongs to the binding-protein-dependent transport system permease family. CysTW subfamily.

The protein localises to the cell membrane. In terms of biological role, part of the binding-protein-dependent transport system YqgGHIJK. Probably responsible for the translocation of the substrate across the membrane. The polypeptide is Probable ABC transporter permease protein YqgH (yqgH) (Bacillus subtilis (strain 168)).